The sequence spans 244 residues: Adenosylcobinamide-GDP ribazoletransferase (244 aa).

The next 5 helical transmembrane spans lie at Trp33–Ala53, Pro57–Leu77, Phe109–Val129, Gly132–Trp152, and Phe176–Leu196.

It belongs to the CobS family. It depends on Mg(2+) as a cofactor.

Its subcellular location is the cell inner membrane. It carries out the reaction alpha-ribazole + adenosylcob(III)inamide-GDP = adenosylcob(III)alamin + GMP + H(+). The catalysed reaction is alpha-ribazole 5'-phosphate + adenosylcob(III)inamide-GDP = adenosylcob(III)alamin 5'-phosphate + GMP + H(+). It participates in cofactor biosynthesis; adenosylcobalamin biosynthesis; adenosylcobalamin from cob(II)yrinate a,c-diamide: step 7/7. Its function is as follows. Joins adenosylcobinamide-GDP and alpha-ribazole to generate adenosylcobalamin (Ado-cobalamin). Also synthesizes adenosylcobalamin 5'-phosphate from adenosylcobinamide-GDP and alpha-ribazole 5'-phosphate. The protein is Adenosylcobinamide-GDP ribazoletransferase of Laribacter hongkongensis (strain HLHK9).